Consider the following 619-residue polypeptide: Dihydroxy-acid dehydratase (619 aa).

Asp-81 contacts Mg(2+). Cys-122 contributes to the [2Fe-2S] cluster binding site. Residues Asp-123 and Lys-124 each contribute to the Mg(2+) site. Lys-124 carries the N6-carboxylysine modification. A [2Fe-2S] cluster-binding site is contributed by Cys-198. Glu-494 provides a ligand contact to Mg(2+). Residue Ser-520 is the Proton acceptor of the active site.

Belongs to the IlvD/Edd family. As to quaternary structure, homodimer. It depends on [2Fe-2S] cluster as a cofactor. Mg(2+) is required as a cofactor.

It carries out the reaction (2R)-2,3-dihydroxy-3-methylbutanoate = 3-methyl-2-oxobutanoate + H2O. It catalyses the reaction (2R,3R)-2,3-dihydroxy-3-methylpentanoate = (S)-3-methyl-2-oxopentanoate + H2O. It participates in amino-acid biosynthesis; L-isoleucine biosynthesis; L-isoleucine from 2-oxobutanoate: step 3/4. Its pathway is amino-acid biosynthesis; L-valine biosynthesis; L-valine from pyruvate: step 3/4. Functions in the biosynthesis of branched-chain amino acids. Catalyzes the dehydration of (2R,3R)-2,3-dihydroxy-3-methylpentanoate (2,3-dihydroxy-3-methylvalerate) into 2-oxo-3-methylpentanoate (2-oxo-3-methylvalerate) and of (2R)-2,3-dihydroxy-3-methylbutanoate (2,3-dihydroxyisovalerate) into 2-oxo-3-methylbutanoate (2-oxoisovalerate), the penultimate precursor to L-isoleucine and L-valine, respectively. This Neisseria meningitidis serogroup A / serotype 4A (strain DSM 15465 / Z2491) protein is Dihydroxy-acid dehydratase.